Here is a 130-residue protein sequence, read N- to C-terminus: UPF0713 protein YngL (130 aa).

3 helical membrane passes run Leu-4–Phe-25, Met-62–Leu-84, and Ile-89–Gly-111.

Belongs to the UPF0713 family.

The protein resides in the cell membrane. This is UPF0713 protein YngL (yngL) from Bacillus subtilis (strain 168).